The primary structure comprises 308 residues: Probable manganese-dependent inorganic pyrophosphatase (308 aa).

The Mn(2+) site is built by His-9, Asp-13, Asp-15, Asp-75, His-97, and Asp-149.

This sequence belongs to the PPase class C family. It depends on Mn(2+) as a cofactor.

Its subcellular location is the cytoplasm. It carries out the reaction diphosphate + H2O = 2 phosphate + H(+). The chain is Probable manganese-dependent inorganic pyrophosphatase from Bacillus pumilus (strain SAFR-032).